The chain runs to 132 residues: Ribosome-binding factor A (132 aa).

This sequence belongs to the RbfA family. Monomer. Binds 30S ribosomal subunits, but not 50S ribosomal subunits or 70S ribosomes.

It localises to the cytoplasm. One of several proteins that assist in the late maturation steps of the functional core of the 30S ribosomal subunit. Associates with free 30S ribosomal subunits (but not with 30S subunits that are part of 70S ribosomes or polysomes). Required for efficient processing of 16S rRNA. May interact with the 5'-terminal helix region of 16S rRNA. The polypeptide is Ribosome-binding factor A (Edwardsiella ictaluri (strain 93-146)).